Here is a 274-residue protein sequence, read N- to C-terminus: WIMGHMVNEIYQIDEFVDLGANSIETDITFDENAVAEYSYHGVPCDCRRWCHKWEYVNDFLNALRRATTPGDSKYRRELVLVVFDLKTGDLSSSTANKGGKLFAQKLLQHYWNGGNNGGRAYIIISIPDIDHYAFISGFRNALKEAGHEELLEKVGYDFSGNDDLNSIRNALHKAGVKDKEHVWQSDGITNCILRGLSRVREAVRNRDSSNGYINKVYYWTIEKYVSVRDALDAGVDGIMTNEPDVIVNVLNEKAYKQRFRLANYDDNPWETYQ.

Histidine 5 is a catalytic residue. Mg(2+) is bound by residues glutamate 25 and aspartate 27. Histidine 41 serves as the catalytic Nucleophile. 2 cysteine pairs are disulfide-bonded: cysteine 45–cysteine 51 and cysteine 47–cysteine 192. Residue aspartate 85 participates in Mg(2+) binding.

Belongs to the arthropod phospholipase D family. Class II subfamily. Mg(2+) serves as cofactor. In terms of tissue distribution, expressed by the venom gland.

It localises to the secreted. The enzyme catalyses an N-(acyl)-sphingosylphosphocholine = an N-(acyl)-sphingosyl-1,3-cyclic phosphate + choline. It carries out the reaction an N-(acyl)-sphingosylphosphoethanolamine = an N-(acyl)-sphingosyl-1,3-cyclic phosphate + ethanolamine. It catalyses the reaction a 1-acyl-sn-glycero-3-phosphocholine = a 1-acyl-sn-glycero-2,3-cyclic phosphate + choline. The catalysed reaction is a 1-acyl-sn-glycero-3-phosphoethanolamine = a 1-acyl-sn-glycero-2,3-cyclic phosphate + ethanolamine. In terms of biological role, dermonecrotic toxins cleave the phosphodiester linkage between the phosphate and headgroup of certain phospholipids (sphingolipid and lysolipid substrates), forming an alcohol (often choline) and a cyclic phosphate. This toxin acts on sphingomyelin (SM). It may also act on ceramide phosphoethanolamine (CPE), lysophosphatidylcholine (LPC) and lysophosphatidylethanolamine (LPE), but not on lysophosphatidylserine (LPS), and lysophosphatidylglycerol (LPG). It acts by transphosphatidylation, releasing exclusively cyclic phosphate products as second products. Induces dermonecrosis, hemolysis, increased vascular permeability, edema, inflammatory response, and platelet aggregation. The protein is Dermonecrotic toxin LarSicTox-alphaIV1 of Loxosceles arizonica (Arizona brown spider).